The primary structure comprises 285 residues: 4-hydroxybenzoate octaprenyltransferase (285 aa).

A run of 9 helical transmembrane segments spans residues 19–39, 42–62, 82–102, 104–124, 136–156, 166–186, 210–230, 233–253, and 265–285; these read IGSL…ADGL, WHVL…GCVI, LPSG…LVVC, FLLV…GIVL, YLPQ…AYAA, WLLF…YAMV, IIGL…SQLA, GIYY…QWLI, and FLNN…SVLI.

The protein belongs to the UbiA prenyltransferase family. Mg(2+) is required as a cofactor.

Its subcellular location is the cell inner membrane. The enzyme catalyses all-trans-octaprenyl diphosphate + 4-hydroxybenzoate = 4-hydroxy-3-(all-trans-octaprenyl)benzoate + diphosphate. Its pathway is cofactor biosynthesis; ubiquinone biosynthesis. Its function is as follows. Catalyzes the prenylation of para-hydroxybenzoate (PHB) with an all-trans polyprenyl group. Mediates the second step in the final reaction sequence of ubiquinone-8 (UQ-8) biosynthesis, which is the condensation of the polyisoprenoid side chain with PHB, generating the first membrane-bound Q intermediate 3-octaprenyl-4-hydroxybenzoate. The polypeptide is 4-hydroxybenzoate octaprenyltransferase (Aliivibrio fischeri (strain ATCC 700601 / ES114) (Vibrio fischeri)).